Here is a 585-residue protein sequence, read N- to C-terminus: Glutamate decarboxylase 2 (585 aa).

Residues 1–25 are disordered; the sequence is MASPGSGFWSFGSEDGSGDPENPST. Phosphoserine occurs at positions 3, 6, 10, and 13. Residues cysteine 30 and cysteine 45 are each lipidated (S-palmitoyl cysteine). 181–183 contributes to the substrate binding site; that stretch reads QLS. Lysine 396 is subject to N6-(pyridoxal phosphate)lysine. Arginine 558 is a binding site for substrate.

Belongs to the group II decarboxylase family. As to quaternary structure, homodimer. Pyridoxal 5'-phosphate is required as a cofactor. In terms of processing, phosphorylated; which does not affect kinetic parameters or subcellular location. Palmitoylated; which is required for presynaptic clustering.

The protein resides in the cytoplasm. It localises to the cytosol. Its subcellular location is the cytoplasmic vesicle. It is found in the presynaptic cell membrane. The protein localises to the golgi apparatus membrane. The enzyme catalyses L-glutamate + H(+) = 4-aminobutanoate + CO2. Its function is as follows. Catalyzes the production of GABA. In Canis lupus familiaris (Dog), this protein is Glutamate decarboxylase 2 (GAD2).